The following is a 1704-amino-acid chain: Vitellogenin-1 (1704 aa).

The signal sequence occupies residues 1–14 (MKAVVLALTLAFVA). Residues 22–660 (FAAGKTYVYK…DAATFMPKSF (639 aa)) enclose the Vitellogenin domain. Residues Asn-446, Asn-635, Asn-903, Asn-908, Asn-1019, Asn-1054, Asn-1080, Asn-1121, Asn-1174, Asn-1285, Asn-1322, Asn-1375, Asn-1379, Asn-1405, Asn-1456, and Asn-1512 are each glycosylated (N-linked (GlcNAc...) asparagine). A compositionally biased stretch (low complexity) spans 1078–1109 (RRNSSSSSSSSSSSSSESRSSRSSSSSSSSSR). Positions 1078-1213 (RRNSSSSSSS…SSDRRSKEVM (136 aa)) are disordered. Positions 1122-1204 (SSSSSSSRRS…FSDSSSSSSS (83 aa)) are enriched in low complexity. The 176-residue stretch at 1442 to 1617 (AECSFVEDTL…SWILPAESCR (176 aa)) folds into the VWFD domain. 2 disulfides stabilise this stretch: Cys-1444-Cys-1580 and Cys-1467-Cys-1616.

Phosvitin, an egg yolk storage protein, is one of the most highly phosphorylated (10%) proteins in nature. Post-translationally, the N-terminal of the blood vitellogenin is blocked. Produced by the liver, secreted into the blood and then sequestered by receptor mediated endocytosis into growing oocytes, where it is generally cleaved, giving rise to the respective yolk components composed of complex suite of small cleavage products.

In terms of biological role, precursor of the major egg-yolk proteins that are sources of nutrients during early development of oviparous organisms. The polypeptide is Vitellogenin-1 (vtg1) (Fundulus heteroclitus (Killifish)).